Reading from the N-terminus, the 343-residue chain is UDP-N-acetylglucosamine--N-acetylmuramyl-(pentapeptide) pyrophosphoryl-undecaprenol N-acetylglucosamine transferase (343 aa).

Residues 10–12 (TGG), Asn113, Ser174, and Gln275 contribute to the UDP-N-acetyl-alpha-D-glucosamine site.

It belongs to the glycosyltransferase 28 family. MurG subfamily.

The protein resides in the cell membrane. It catalyses the reaction di-trans,octa-cis-undecaprenyl diphospho-N-acetyl-alpha-D-muramoyl-L-alanyl-D-glutamyl-meso-2,6-diaminopimeloyl-D-alanyl-D-alanine + UDP-N-acetyl-alpha-D-glucosamine = di-trans,octa-cis-undecaprenyl diphospho-[N-acetyl-alpha-D-glucosaminyl-(1-&gt;4)]-N-acetyl-alpha-D-muramoyl-L-alanyl-D-glutamyl-meso-2,6-diaminopimeloyl-D-alanyl-D-alanine + UDP + H(+). The protein operates within cell wall biogenesis; peptidoglycan biosynthesis. Its function is as follows. Cell wall formation. Catalyzes the transfer of a GlcNAc subunit on undecaprenyl-pyrophosphoryl-MurNAc-pentapeptide (lipid intermediate I) to form undecaprenyl-pyrophosphoryl-MurNAc-(pentapeptide)GlcNAc (lipid intermediate II). This Wolbachia sp. subsp. Brugia malayi (strain TRS) protein is UDP-N-acetylglucosamine--N-acetylmuramyl-(pentapeptide) pyrophosphoryl-undecaprenol N-acetylglucosamine transferase.